The sequence spans 587 residues: MFS-type transporter opaD (587 aa).

The next 9 membrane-spanning stretches (helical) occupy residues 87 to 107, 124 to 146, 153 to 173, 184 to 204, 214 to 234, 242 to 262, 284 to 304, 315 to 335, and 357 to 377; these read VAIMIALCLAVLCMALDNTIL, MGWYVSAYMLAQSSMTLVYGKLL, WVYIAALLLFEGGSLICGVSP, ISGTGGSGILVSSFLIVTIIV, GILSSLYAISGVFGPLLGGAF, WCFYINLPVGGVTGFFILLLF, IIGLFLFIPALVSLLLVLQWG, IIALIAVFGVTILAFAAVEYW, and LFTFCLSGSVIIFNYYLPIWF. The N-linked (GlcNAc...) asparagine glycan is linked to Asn382. 5 consecutive transmembrane segments (helical) span residues 393–413, 414–434, 447–467, 483–503, and 554–574; these read IPLILAVALTSILSGWAVTTL, GYYIPFMYATPVIASVGAGLL, IGFQILYGIGVGLGFGLPLVV, LVTLTQGLAGALFNFVAQSVF, and VYLVGAALAAAALLGVVPIRW.

It belongs to the major facilitator superfamily. TCR/Tet family.

The protein localises to the membrane. Functionally, MFS-type transporter; part of the gene cluster that mediates the biosynthesis of oxepinamides, derivatives of anthranilyl-containing tripeptides that share an oxepin ring and a fused pyrimidinone moiety. This Aspergillus ustus protein is MFS-type transporter opaD.